The primary structure comprises 140 residues: MSKSRRTRSTSRPTSRPQPASCPCGLPEVYEACCGRFHSGAADAPTAALLMRSRYCAFVRRDEAYLLRTWHPRTRPAEVDFDPRMRWTGLEILGTTEGSAFHSAGTVTFRASYRGGALQERSRFERIGGAWVYVDGEFFE.

Positions methionine 1–cysteine 22 are disordered. Residues threonine 10–proline 19 show a composition bias toward low complexity.

It belongs to the UPF0225 family.

The chain is UPF0225 protein SAV_6631 from Streptomyces avermitilis (strain ATCC 31267 / DSM 46492 / JCM 5070 / NBRC 14893 / NCIMB 12804 / NRRL 8165 / MA-4680).